Consider the following 553-residue polypeptide: uncharacterized protein (553 aa).

An N-terminal signal peptide occupies residues 1–28 (MRYARHASRYSLFTLAVSAALLPGAGWA).

This is an uncharacterized protein from Pseudomonas aeruginosa (strain ATCC 15692 / DSM 22644 / CIP 104116 / JCM 14847 / LMG 12228 / 1C / PRS 101 / PAO1).